The sequence spans 339 residues: N-acetyl-gamma-glutamyl-phosphate reductase (339 aa).

C145 is a catalytic residue.

It belongs to the NAGSA dehydrogenase family. Type 1 subfamily.

It is found in the cytoplasm. The enzyme catalyses N-acetyl-L-glutamate 5-semialdehyde + phosphate + NADP(+) = N-acetyl-L-glutamyl 5-phosphate + NADPH + H(+). It functions in the pathway amino-acid biosynthesis; L-arginine biosynthesis; N(2)-acetyl-L-ornithine from L-glutamate: step 3/4. Catalyzes the NADPH-dependent reduction of N-acetyl-5-glutamyl phosphate to yield N-acetyl-L-glutamate 5-semialdehyde. This chain is N-acetyl-gamma-glutamyl-phosphate reductase, found in Thermotoga sp. (strain RQ2).